Reading from the N-terminus, the 174-residue chain is Calcium-binding protein F (174 aa).

4 EF-hand domains span residues 9–44, 60–83, 92–127, and 133–162; these read KIFQ…KMDG, VDMD…EAKK, AALA…NGHT, and DQVL…RRID. 5 residues coordinate Ca(2+): Asp22, Asn24, Asp26, Ser28, and Asp33. 10 residues coordinate Ca(2+): Asp105, Asp107, Asp109, Lys111, Glu116, Asp140, Asp142, Asp144, Cys146, and Glu151.

The chain is Calcium-binding protein F (cbpF) from Dictyostelium discoideum (Social amoeba).